The sequence spans 412 residues: Short-chain specific acyl-CoA dehydrogenase, mitochondrial (412 aa).

The N-terminal 24 residues, 1–24 (MAAALLARAGGSLGRALRARDWRR), are a transit peptide targeting the mitochondrion. A Phosphothreonine modification is found at threonine 27. An N6-acetyllysine; alternate modification is found at lysine 51. Lysine 51 carries the post-translational modification N6-succinyllysine; alternate. Residue lysine 72 is modified to N6-acetyllysine. Lysine 129 is subject to N6-acetyllysine; alternate. Position 129 is an N6-succinyllysine; alternate (lysine 129). FAD contacts are provided by residues 152-161 (FALSEPGNGS) and 185-187 (WIT). Serine 161 contacts substrate. N6-acetyllysine is present on lysine 208. At lysine 262 the chain carries N6-acetyllysine; alternate. Lysine 262 carries the post-translational modification N6-succinyllysine; alternate. 269–272 (DMGR) is a substrate binding site. Residue lysine 292 is modified to N6-acetyllysine. Position 297 (arginine 297) interacts with FAD. Lysine 306 is modified (N6-acetyllysine; alternate). Lysine 306 is subject to N6-succinyllysine; alternate. 365 to 369 (QILGG) is an FAD binding site. Glutamate 392 (proton acceptor) is an active-site residue. 394–396 (TSE) provides a ligand contact to FAD.

The protein belongs to the acyl-CoA dehydrogenase family. In terms of assembly, homotetramer. It depends on FAD as a cofactor.

Its subcellular location is the mitochondrion matrix. The catalysed reaction is a short-chain 2,3-saturated fatty acyl-CoA + oxidized [electron-transfer flavoprotein] + H(+) = a short-chain (2E)-enoyl-CoA + reduced [electron-transfer flavoprotein]. The enzyme catalyses butanoyl-CoA + oxidized [electron-transfer flavoprotein] + H(+) = (2E)-butenoyl-CoA + reduced [electron-transfer flavoprotein]. It catalyses the reaction pentanoyl-CoA + oxidized [electron-transfer flavoprotein] + H(+) = (2E)-pentenoyl-CoA + reduced [electron-transfer flavoprotein]. It carries out the reaction hexanoyl-CoA + oxidized [electron-transfer flavoprotein] + H(+) = (2E)-hexenoyl-CoA + reduced [electron-transfer flavoprotein]. Its pathway is lipid metabolism; mitochondrial fatty acid beta-oxidation. Short-chain specific acyl-CoA dehydrogenase is one of the acyl-CoA dehydrogenases that catalyze the first step of mitochondrial fatty acid beta-oxidation, an aerobic process breaking down fatty acids into acetyl-CoA and allowing the production of energy from fats. The first step of fatty acid beta-oxidation consists in the removal of one hydrogen from C-2 and C-3 of the straight-chain fatty acyl-CoA thioester, resulting in the formation of trans-2-enoyl-CoA. Among the different mitochondrial acyl-CoA dehydrogenases, short-chain specific acyl-CoA dehydrogenase acts specifically on acyl-CoAs with saturated 4 to 6 carbons long primary chains. The chain is Short-chain specific acyl-CoA dehydrogenase, mitochondrial (Acads) from Rattus norvegicus (Rat).